The following is a 97-amino-acid chain: Large ribosomal subunit protein bL28 (97 aa).

It belongs to the bacterial ribosomal protein bL28 family.

The protein is Large ribosomal subunit protein bL28 of Rickettsia bellii (strain OSU 85-389).